A 283-amino-acid polypeptide reads, in one-letter code: Pantothenate synthetase (283 aa).

Residue 26 to 33 (MGNLHEGH) coordinates ATP. The Proton donor role is filled by H33. Residue Q57 participates in (R)-pantoate binding. Position 57 (Q57) interacts with beta-alanine. 144–147 (GKKD) contributes to the ATP binding site. Q150 is a binding site for (R)-pantoate. 181–184 (LSSR) serves as a coordination point for ATP.

Belongs to the pantothenate synthetase family. As to quaternary structure, homodimer.

Its subcellular location is the cytoplasm. The enzyme catalyses (R)-pantoate + beta-alanine + ATP = (R)-pantothenate + AMP + diphosphate + H(+). It participates in cofactor biosynthesis; (R)-pantothenate biosynthesis; (R)-pantothenate from (R)-pantoate and beta-alanine: step 1/1. Catalyzes the condensation of pantoate with beta-alanine in an ATP-dependent reaction via a pantoyl-adenylate intermediate. The chain is Pantothenate synthetase from Variovorax paradoxus (strain S110).